Consider the following 210-residue polypeptide: Pyridoxine/pyridoxamine 5'-phosphate oxidase (210 aa).

Substrate contacts are provided by residues 7–10 (RQSY) and Lys65. Residues 60-65 (RIVLIK), 75-76 (FT), Arg81, Lys82, and Gln104 contribute to the FMN site. Substrate contacts are provided by Tyr122, Arg126, and Ser130. Residues 139 to 140 (QS) and Trp182 contribute to the FMN site. 188–190 (RLH) provides a ligand contact to substrate. Arg192 contributes to the FMN binding site.

It belongs to the pyridoxamine 5'-phosphate oxidase family. As to quaternary structure, homodimer. FMN serves as cofactor.

It carries out the reaction pyridoxamine 5'-phosphate + O2 + H2O = pyridoxal 5'-phosphate + H2O2 + NH4(+). The catalysed reaction is pyridoxine 5'-phosphate + O2 = pyridoxal 5'-phosphate + H2O2. It functions in the pathway cofactor metabolism; pyridoxal 5'-phosphate salvage; pyridoxal 5'-phosphate from pyridoxamine 5'-phosphate: step 1/1. Its pathway is cofactor metabolism; pyridoxal 5'-phosphate salvage; pyridoxal 5'-phosphate from pyridoxine 5'-phosphate: step 1/1. Its function is as follows. Catalyzes the oxidation of either pyridoxine 5'-phosphate (PNP) or pyridoxamine 5'-phosphate (PMP) into pyridoxal 5'-phosphate (PLP). This chain is Pyridoxine/pyridoxamine 5'-phosphate oxidase, found in Bordetella avium (strain 197N).